The primary structure comprises 179 residues: Large ribosomal subunit protein uL6 (179 aa).

Belongs to the universal ribosomal protein uL6 family. Part of the 50S ribosomal subunit.

Functionally, this protein binds to the 23S rRNA, and is important in its secondary structure. It is located near the subunit interface in the base of the L7/L12 stalk, and near the tRNA binding site of the peptidyltransferase center. The sequence is that of Large ribosomal subunit protein uL6 from Prochlorococcus marinus (strain MIT 9312).